A 118-amino-acid chain; its full sequence is Large ribosomal subunit protein eL22 (118 aa).

The protein belongs to the eukaryotic ribosomal protein eL22 family.

In Tetrahymena thermophila (strain SB210), this protein is Large ribosomal subunit protein eL22 (RPL22).